The sequence spans 433 residues: Serine--tRNA ligase (433 aa).

235-237 (TSE) contributes to the L-serine binding site. Residue 266-268 (RSE) coordinates ATP. Glu289 lines the L-serine pocket. Residue 353–356 (EISS) coordinates ATP. Ser388 contributes to the L-serine binding site.

It belongs to the class-II aminoacyl-tRNA synthetase family. Type-1 seryl-tRNA synthetase subfamily. Homodimer. The tRNA molecule binds across the dimer.

Its subcellular location is the cytoplasm. It catalyses the reaction tRNA(Ser) + L-serine + ATP = L-seryl-tRNA(Ser) + AMP + diphosphate + H(+). The catalysed reaction is tRNA(Sec) + L-serine + ATP = L-seryl-tRNA(Sec) + AMP + diphosphate + H(+). Its pathway is aminoacyl-tRNA biosynthesis; selenocysteinyl-tRNA(Sec) biosynthesis; L-seryl-tRNA(Sec) from L-serine and tRNA(Sec): step 1/1. Functionally, catalyzes the attachment of serine to tRNA(Ser). Is also able to aminoacylate tRNA(Sec) with serine, to form the misacylated tRNA L-seryl-tRNA(Sec), which will be further converted into selenocysteinyl-tRNA(Sec). The protein is Serine--tRNA ligase of Burkholderia vietnamiensis (strain G4 / LMG 22486) (Burkholderia cepacia (strain R1808)).